The following is a 612-amino-acid chain: Bifunctional lycopene cyclase/phytoene synthase (612 aa).

The tract at residues 1–268 is lycopene beta-cyclase; sequence MGWEYAQVHL…IVFGLIACDN (268 aa). The next 7 membrane-spanning stretches (helical) occupy residues 3–23, 31–51, 112–130, 148–168, 171–191, 203–223, and 246–266; these read WEYA…LAAV, LDVF…VKGL, LFFF…MILS, IAGQ…VSSG, GMYM…LWSI, NTAL…TFAL, and IEEA…LIAC. Residues 275 to 612 form a phytoene synthase region; it reads TFPEHFPRTK…IRVAWSALNK (338 aa).

In the N-terminal section; belongs to the lycopene beta-cyclase family. It in the C-terminal section; belongs to the phytoene/squalene synthase family.

It is found in the membrane. It catalyses the reaction all-trans-lycopene = gamma-carotene. The enzyme catalyses gamma-carotene = all-trans-beta-carotene. It carries out the reaction 2 (2E,6E,10E)-geranylgeranyl diphosphate = 15-cis-phytoene + 2 diphosphate. It participates in carotenoid biosynthesis; beta-carotene biosynthesis. It functions in the pathway carotenoid biosynthesis; phytoene biosynthesis; all-trans-phytoene from geranylgeranyl diphosphate: step 1/1. Functionally, bifunctional enzyme; part of the car gene cluster that mediates the biosynthesis of neurosporaxanthin, a carboxylic apocarotenoid acting as an essential protective pigments and leading to orange pigmentation. CarAR catalyzes the first step of the pathway by converting geranylgeranyl diphosphate to phytoene, as well as the later cyclization step that transforms the carB product lycopene into gamma-carotene. CarAR also converts part of gamma-carotene into beta-carotene. Neurosporaxanthin is synthesized from geranyl-geranyl pyrophosphate (GGPP) through several enzymatic activities. Phytoene synthase activity performed by the bifunctional enzyme carAR first produces phytoene from geranyl-geranyl pyrophosphate (GGPP). The phytoene dehydrogenase carB then introduces 4 desaturations to lead to lycopene which is substrate of the carotene cyclase activity of carAR that leads to the production of gamma-carotene. CarB then performs a 5th desaturation reaction to yield torulene. Torulene is the substrate of the dioxidase carT that breaks the molecule, removing five carbon atoms to yield beta-apo-4'-carotenal, whereas the aldehyde dehydrogenase carD mediates the last step by converting beta-apo-4'-carotenal into neurosporaxanthin. The sequence is that of Bifunctional lycopene cyclase/phytoene synthase from Fusarium fujikuroi (Bakanae and foot rot disease fungus).